Reading from the N-terminus, the 137-residue chain is Putative pre-16S rRNA nuclease (137 aa).

The protein belongs to the YqgF nuclease family.

The protein localises to the cytoplasm. Functionally, could be a nuclease involved in processing of the 5'-end of pre-16S rRNA. The polypeptide is Putative pre-16S rRNA nuclease (Clostridium botulinum (strain 657 / Type Ba4)).